A 162-amino-acid chain; its full sequence is MLSLKSPAVLLSMVILVPLFALAVKQPYEYDFFMWNGAQEEYEKAHGHIPFEPAHVGADDFDKRIPEFKNKLLETAVVTGKLKGAIKIGVRGSRAQGNRAIWFTTIVHPEDSVGKEMDLQHELALILWRQEAYRKSLLWIDMVPIRGVHWGLQDLNTVLRHF.

The signal sequence occupies residues 1-23 (MLSLKSPAVLLSMVILVPLFALA).

This is an uncharacterized protein from Mycosarcoma maydis (Corn smut fungus).